The sequence spans 277 residues: 2-dehydro-3-deoxyphosphooctonate aldolase (277 aa).

This sequence belongs to the KdsA family.

It is found in the cytoplasm. It catalyses the reaction D-arabinose 5-phosphate + phosphoenolpyruvate + H2O = 3-deoxy-alpha-D-manno-2-octulosonate-8-phosphate + phosphate. It participates in carbohydrate biosynthesis; 3-deoxy-D-manno-octulosonate biosynthesis; 3-deoxy-D-manno-octulosonate from D-ribulose 5-phosphate: step 2/3. The protein operates within bacterial outer membrane biogenesis; lipopolysaccharide biosynthesis. This chain is 2-dehydro-3-deoxyphosphooctonate aldolase, found in Alkalilimnicola ehrlichii (strain ATCC BAA-1101 / DSM 17681 / MLHE-1).